Here is a 383-residue protein sequence, read N- to C-terminus: Dephospho-CoA kinase (383 aa).

Positions 3–201 constitute a DPCK domain; the sequence is RIGLTGGMGA…RRLVPFERNL (199 aa). Residue 11–16 participates in ATP binding; the sequence is GAGKST. The tract at residues 196–383 is UPF0157; that stretch reads PFERNLRAAT…EVAERLLGTV (188 aa).

The protein in the N-terminal section; belongs to the CoaE family. It in the C-terminal section; belongs to the UPF0157 (GrpB) family.

The protein localises to the cytoplasm. The enzyme catalyses 3'-dephospho-CoA + ATP = ADP + CoA + H(+). It functions in the pathway cofactor biosynthesis; coenzyme A biosynthesis; CoA from (R)-pantothenate: step 5/5. Its function is as follows. Catalyzes the phosphorylation of the 3'-hydroxyl group of dephosphocoenzyme A to form coenzyme A. This is Dephospho-CoA kinase from Nocardia farcinica (strain IFM 10152).